The following is a 166-amino-acid chain: NAD(P)H-quinone oxidoreductase subunit I, chloroplastic (166 aa).

4Fe-4S ferredoxin-type domains follow at residues 55–84 and 95–124; these read GRIH…VDWK and LNYS…MTEE. Residues C64, C67, C70, C74, C104, C107, C110, and C114 each coordinate [4Fe-4S] cluster.

Belongs to the complex I 23 kDa subunit family. NDH is composed of at least 16 different subunits, 5 of which are encoded in the nucleus. [4Fe-4S] cluster is required as a cofactor.

It localises to the plastid. The protein resides in the chloroplast thylakoid membrane. The catalysed reaction is a plastoquinone + NADH + (n+1) H(+)(in) = a plastoquinol + NAD(+) + n H(+)(out). It carries out the reaction a plastoquinone + NADPH + (n+1) H(+)(in) = a plastoquinol + NADP(+) + n H(+)(out). In terms of biological role, NDH shuttles electrons from NAD(P)H:plastoquinone, via FMN and iron-sulfur (Fe-S) centers, to quinones in the photosynthetic chain and possibly in a chloroplast respiratory chain. The immediate electron acceptor for the enzyme in this species is believed to be plastoquinone. Couples the redox reaction to proton translocation, and thus conserves the redox energy in a proton gradient. The polypeptide is NAD(P)H-quinone oxidoreductase subunit I, chloroplastic (Bahiopsis tomentosa (Tecote)).